The chain runs to 411 residues: Aspartokinase (411 aa).

ATP is bound at residue 7-10 (KFGG). Substrate is bound at residue 25 to 30 (RVIEEK). S41 is a binding site for ATP. Substrate-binding positions include 47–49 (TDE), E74, 125–126 (LN), 150–153 (RGGS), and S153. ATP-binding positions include 173 to 174 (TD) and 179 to 184 (FTTDPR). ACT domains lie at 264 to 338 (VTVF…SETG) and 344 to 411 (IVGS…KSER). Substrate-binding positions include 289–291 (NVD), Q295, 355–356 (VA), 369–370 (QV), and 376–377 (SE).

Belongs to the aspartokinase family. As to quaternary structure, tetramer consisting of 2 isoforms Alpha (catalytic and regulation) and of a homodimer of 2 isoforms Beta (regulation).

It catalyses the reaction L-aspartate + ATP = 4-phospho-L-aspartate + ADP. Its pathway is amino-acid biosynthesis; L-lysine biosynthesis via DAP pathway; (S)-tetrahydrodipicolinate from L-aspartate: step 1/4. The protein operates within amino-acid biosynthesis; L-methionine biosynthesis via de novo pathway; L-homoserine from L-aspartate: step 1/3. It participates in amino-acid biosynthesis; L-threonine biosynthesis; L-threonine from L-aspartate: step 1/5. Lysine-sensitive. Catalyzes the phosphorylation of the beta-carboxyl group of aspartic acid with ATP to yield 4-phospho-L-aspartate, which is involved in the branched biosynthetic pathway leading to the biosynthesis of amino acids threonine, isoleucine and methionine. The sequence is that of Aspartokinase (lysC) from Bacillus sp. (strain MGA3).